A 486-amino-acid polypeptide reads, in one-letter code: Glutamate--tRNA ligase (486 aa).

The 'HIGH' region signature appears at 11-21; the sequence is PSPTGFLHIGG. Positions 108, 110, 136, and 138 each coordinate Zn(2+). A 'KMSKS' region motif is present at residues 253 to 257; that stretch reads KLSKR. Lysine 256 contributes to the ATP binding site.

The protein belongs to the class-I aminoacyl-tRNA synthetase family. Glutamate--tRNA ligase type 1 subfamily. Monomer. Requires Zn(2+) as cofactor.

It localises to the cytoplasm. It carries out the reaction tRNA(Glu) + L-glutamate + ATP = L-glutamyl-tRNA(Glu) + AMP + diphosphate. In terms of biological role, catalyzes the attachment of glutamate to tRNA(Glu) in a two-step reaction: glutamate is first activated by ATP to form Glu-AMP and then transferred to the acceptor end of tRNA(Glu). This chain is Glutamate--tRNA ligase, found in Lysinibacillus sphaericus (strain C3-41).